A 178-amino-acid chain; its full sequence is Cytochrome b6-f complex iron-sulfur subunit (178 aa).

Residues 20–42 (LLTFGSVTGVALGSLYPVVKYFI) traverse the membrane as a helical segment. Residues 68–161 (WLANHSDGDR…IAVENDNVFV (94 aa)) form the Rieske domain. Positions 107, 109, 125, and 128 each coordinate [2Fe-2S] cluster. Cysteines 112 and 127 form a disulfide.

This sequence belongs to the Rieske iron-sulfur protein family. The 4 large subunits of the cytochrome b6-f complex are cytochrome b6, subunit IV (17 kDa polypeptide, PetD), cytochrome f and the Rieske protein, while the 4 small subunits are PetG, PetL, PetM and PetN. The complex functions as a dimer. [2Fe-2S] cluster is required as a cofactor.

The protein localises to the cellular thylakoid membrane. It carries out the reaction 2 oxidized [plastocyanin] + a plastoquinol + 2 H(+)(in) = 2 reduced [plastocyanin] + a plastoquinone + 4 H(+)(out). Component of the cytochrome b6-f complex, which mediates electron transfer between photosystem II (PSII) and photosystem I (PSI), cyclic electron flow around PSI, and state transitions. The polypeptide is Cytochrome b6-f complex iron-sulfur subunit (Prochlorococcus marinus (strain MIT 9303)).